The following is a 350-amino-acid chain: Histidinol-phosphate aminotransferase (350 aa).

The residue at position 209 (Lys-209) is an N6-(pyridoxal phosphate)lysine.

The protein belongs to the class-II pyridoxal-phosphate-dependent aminotransferase family. Histidinol-phosphate aminotransferase subfamily. In terms of assembly, homodimer. The cofactor is pyridoxal 5'-phosphate.

It carries out the reaction L-histidinol phosphate + 2-oxoglutarate = 3-(imidazol-4-yl)-2-oxopropyl phosphate + L-glutamate. It participates in amino-acid biosynthesis; L-histidine biosynthesis; L-histidine from 5-phospho-alpha-D-ribose 1-diphosphate: step 7/9. This Citrifermentans bemidjiense (strain ATCC BAA-1014 / DSM 16622 / JCM 12645 / Bem) (Geobacter bemidjiensis) protein is Histidinol-phosphate aminotransferase.